Consider the following 168-residue polypeptide: Desumoylating isopeptidase 1 (168 aa).

The 143-residue stretch at 7–149 (YPVKLYVYDL…FGQALRPLLD (143 aa)) folds into the PPPDE domain. H38 is an active-site residue. The short motif at 83 to 91 (IFLEYLSSL) is the Nuclear export signal 1 element. C108 is an active-site residue. The Nuclear export signal 2 signature appears at 139 to 153 (PFGQALRPLLDSIQI).

This sequence belongs to the DeSI family. Homodimer. Interacts with UBQLN4; leading to the export of UBQLN4 from the nucleus.

It localises to the cytoplasm. It is found in the nucleus. The enzyme catalyses S-hexadecanoyl-L-cysteinyl-[protein] + H2O = L-cysteinyl-[protein] + hexadecanoate + H(+). With respect to regulation, palmostatin B inhibits its palmitoyl protein thioesterase activity. Protease which deconjugates SUMO1, SUMO2 and SUMO3 from some substrate proteins. Has isopeptidase but not SUMO-processing activity. Desumoylates ZBTB46. Collaborates with UBQLN4 in the export of ubiquitinated proteins from the nucleus to the cytoplasm. Exhibits palmitoyl protein thioesterase (S-depalmitoylation) activity towards synthetic substrates 4-methylumbelliferyl-6-S-palmitoyl-beta-D-glucopyranoside and S-depalmitoylation probe 5 (DPP-5). In Homo sapiens (Human), this protein is Desumoylating isopeptidase 1.